Reading from the N-terminus, the 400-residue chain is Argininosuccinate synthase (400 aa).

8 to 16 (AYSGGLDTS) contacts ATP. Tyrosine 87 contacts L-citrulline. Glycine 117 lines the ATP pocket. Residues threonine 119, asparagine 123, and aspartate 124 each contribute to the L-aspartate site. Residue asparagine 123 coordinates L-citrulline. The L-citrulline site is built by arginine 127, serine 175, glutamate 260, and tyrosine 272.

The protein belongs to the argininosuccinate synthase family. Type 1 subfamily. As to quaternary structure, homotetramer.

It is found in the cytoplasm. It catalyses the reaction L-citrulline + L-aspartate + ATP = 2-(N(omega)-L-arginino)succinate + AMP + diphosphate + H(+). Its pathway is amino-acid biosynthesis; L-arginine biosynthesis; L-arginine from L-ornithine and carbamoyl phosphate: step 2/3. The chain is Argininosuccinate synthase from Mycobacterium sp. (strain KMS).